Reading from the N-terminus, the 164-residue chain is R-phycoerythrin alpha chain (164 aa).

8 residues coordinate (2R,3E)-phycoerythrobilin: N47, K81, C82, R84, H88, R137, C139, and R142.

The protein belongs to the phycobiliprotein family. Heterododecamer of 6 alpha and 6 beta chains. The basic functional unit of phycobiliproteins is a ring-shaped hexamer formed from two back-to-back trimers contacting via the alpha chain subunits. The trimers are composed of alpha/beta subunit heterodimers arranged around a three-fold axis of symmetry. The phycoerythrins also contain a gamma subunit which is located in the center of the hexamer. In terms of processing, contains two covalently linked phycoerythrobilin chromophores. In PubMed:8876649 the authors refer to the bilins as phycoerythrobilins. In the PDB entries, the bilins are named as phycocyanobilins although the modeled compounds correspond to phycoerythrobilins.

It is found in the plastid. Its subcellular location is the chloroplast thylakoid membrane. Its function is as follows. Light-harvesting photosynthetic tetrapyrrole chromophore-protein from the phycobiliprotein complex. The protein is R-phycoerythrin alpha chain (cpeA) of Polysiphonia urceolata (Red alga).